A 355-amino-acid polypeptide reads, in one-letter code: MAQPSFFQSPPPTTLAAIAAAANATLVDASRGEQVITGLAALDEAGPMHLAFFDNLKYADQLAMTKAGACLVSPRFEARVPSHVAVVRANQPFRAFVQLARTMHADALRPQSWFGCDGISSQAIIDPSARLEDGVVVEPLAVIGAHVEIGAGTIVGAGAVIGPHVKIGRDCNVGARTVIQCALIGNDVLIHPACAIGQDGYGFIFFGPGGHVKVPQTGRVIIQNHVEIGAGTTIDRGSLRDTVIGEGTKIDNQVQIGHNVTIGRHCLLAAQIGLAGSLTIGDNVALGAKVGINNHLTIGDGAQVTAMSGVKDDIPPNGRWGGFFAKPTKQWFREIVAVERLVRDQTATNKDEGQE.

H258 acts as the Proton acceptor in catalysis.

Belongs to the transferase hexapeptide repeat family. LpxD subfamily. In terms of assembly, homotrimer.

The catalysed reaction is a UDP-3-O-[(3R)-3-hydroxyacyl]-alpha-D-glucosamine + a (3R)-hydroxyacyl-[ACP] = a UDP-2-N,3-O-bis[(3R)-3-hydroxyacyl]-alpha-D-glucosamine + holo-[ACP] + H(+). It functions in the pathway bacterial outer membrane biogenesis; LPS lipid A biosynthesis. In terms of biological role, catalyzes the N-acylation of UDP-3-O-acylglucosamine using 3-hydroxyacyl-ACP as the acyl donor. Is involved in the biosynthesis of lipid A, a phosphorylated glycolipid that anchors the lipopolysaccharide to the outer membrane of the cell. The polypeptide is UDP-3-O-acylglucosamine N-acyltransferase (Bradyrhizobium sp. (strain BTAi1 / ATCC BAA-1182)).